Reading from the N-terminus, the 519-residue chain is GMP synthase [glutamine-hydrolyzing] (519 aa).

Residues 4 to 201 enclose the Glutamine amidotransferase type-1 domain; it reads AILILDFGSQ…VHDICDAGYD (198 aa). Residue Cys81 is the Nucleophile of the active site. Active-site residues include His175 and Glu177. Residues 202-394 form the GMPS ATP-PPase domain; the sequence is WNMPDYVEEA…LGLPRDLVFR (193 aa). 229 to 235 contributes to the ATP binding site; that stretch reads SGGVDSS.

As to quaternary structure, homodimer.

It carries out the reaction XMP + L-glutamine + ATP + H2O = GMP + L-glutamate + AMP + diphosphate + 2 H(+). The protein operates within purine metabolism; GMP biosynthesis; GMP from XMP (L-Gln route): step 1/1. Catalyzes the synthesis of GMP from XMP. This chain is GMP synthase [glutamine-hydrolyzing], found in Nitrosomonas eutropha (strain DSM 101675 / C91 / Nm57).